A 173-amino-acid polypeptide reads, in one-letter code: Translation initiation factor IF-3 (173 aa).

Belongs to the IF-3 family. In terms of assembly, monomer.

It is found in the cytoplasm. Functionally, IF-3 binds to the 30S ribosomal subunit and shifts the equilibrium between 70S ribosomes and their 50S and 30S subunits in favor of the free subunits, thus enhancing the availability of 30S subunits on which protein synthesis initiation begins. This is Translation initiation factor IF-3 from Methylobacterium radiotolerans (strain ATCC 27329 / DSM 1819 / JCM 2831 / NBRC 15690 / NCIMB 10815 / 0-1).